Reading from the N-terminus, the 1049-residue chain is Cilia- and flagella-associated protein 337 (1049 aa).

The EF-hand domain maps to 81–116 (GTKEEYGELFDKVDVAQDGFINWDKLTSFILLELYE). WD repeat units lie at residues 138-177 (KHKD…QETF), 358-397 (NIAQ…KPVG), 401-440 (GHSA…SIQR), 487-528 (SHEK…KQFT), 531-570 (HGNA…HHTL), and 633-671 (QHHD…AHHV). The interval 691 to 712 (LLSAGRSQPSHPMADHSTTGVR) is disordered. The segment covering 695-711 (GRSQPSHPMADHSTTGV) has biased composition (polar residues). WD repeat units follow at residues 719–766 (EGKN…LLAE), 769–809 (AHSG…LNSS), and 825–866 (PHED…VWIF).

Belongs to the CFAP337 family. As to quaternary structure, associates with components of the nexin-dynein regulatory complex (N-DRC) and the CFAP184:CFAP263 complex.

It is found in the cell projection. The protein localises to the cilium. In terms of biological role, associates with components of the nexin-dynein regulatory complex (N-DRC), a key regulator of ciliary/flagellar motility, and might act as an inner dynein arm (IDA) hub or linkage. This is Cilia- and flagella-associated protein 337 from Homo sapiens (Human).